The sequence spans 70 residues: Sec-independent protein translocase protein TatA (70 aa).

The helical transmembrane segment at 1–21 (MGIGVWELLLLFLIVLVVFGT) threads the bilayer. The segment at 42 to 70 (MSENEDKPSEGGARTLEGEVVDKKEKDKV) is disordered. Over residues 57 to 70 (LEGEVVDKKEKDKV) the composition is skewed to basic and acidic residues.

Belongs to the TatA/E family. The Tat system comprises two distinct complexes: a TatABC complex, containing multiple copies of TatA, TatB and TatC subunits, and a separate TatA complex, containing only TatA subunits. Substrates initially bind to the TatABC complex, which probably triggers association of the separate TatA complex to form the active translocon.

The protein resides in the cell inner membrane. Part of the twin-arginine translocation (Tat) system that transports large folded proteins containing a characteristic twin-arginine motif in their signal peptide across membranes. TatA could form the protein-conducting channel of the Tat system. The polypeptide is Sec-independent protein translocase protein TatA (Methylococcus capsulatus (strain ATCC 33009 / NCIMB 11132 / Bath)).